The primary structure comprises 247 residues: NAD(P)H-quinone oxidoreductase subunit K (247 aa).

Residues C63, C64, C128, and C159 each coordinate [4Fe-4S] cluster.

This sequence belongs to the complex I 20 kDa subunit family. In terms of assembly, NDH-1 can be composed of about 15 different subunits; different subcomplexes with different compositions have been identified which probably have different functions. Requires [4Fe-4S] cluster as cofactor.

The protein localises to the cellular thylakoid membrane. The catalysed reaction is a plastoquinone + NADH + (n+1) H(+)(in) = a plastoquinol + NAD(+) + n H(+)(out). The enzyme catalyses a plastoquinone + NADPH + (n+1) H(+)(in) = a plastoquinol + NADP(+) + n H(+)(out). In terms of biological role, NDH-1 shuttles electrons from an unknown electron donor, via FMN and iron-sulfur (Fe-S) centers, to quinones in the respiratory and/or the photosynthetic chain. The immediate electron acceptor for the enzyme in this species is believed to be plastoquinone. Couples the redox reaction to proton translocation, and thus conserves the redox energy in a proton gradient. Cyanobacterial NDH-1 also plays a role in inorganic carbon-concentration. The sequence is that of NAD(P)H-quinone oxidoreductase subunit K from Microcystis aeruginosa (strain NIES-843 / IAM M-2473).